Here is a 331-residue protein sequence, read N- to C-terminus: tRNA uridine(34) hydroxylase (331 aa).

One can recognise a Rhodanese domain in the interval K122–W218. The active-site Cysteine persulfide intermediate is the C178.

The protein belongs to the TrhO family.

It carries out the reaction uridine(34) in tRNA + AH2 + O2 = 5-hydroxyuridine(34) in tRNA + A + H2O. Catalyzes oxygen-dependent 5-hydroxyuridine (ho5U) modification at position 34 in tRNAs. The sequence is that of tRNA uridine(34) hydroxylase from Chlamydia caviae (strain ATCC VR-813 / DSM 19441 / 03DC25 / GPIC) (Chlamydophila caviae).